A 962-amino-acid polypeptide reads, in one-letter code: MTKQTLTQLEQHDLFLRRHIGPDSNQQQAMLNFVGAESLEDLTAQIVPESIRLSQDLSIGDSCGEAEGIAYIRGLADQNQVFKSYIGMGYYGTQVPNVILRNVFENPGWYTAYTPYQPEIAQGRLEAILNFQQVSMDLTGLDLASASLLDEATAAAEAMALAKRVSKAKKANIFFVADDVFPQTLDVVKTRAECFGFEVVVGPASEAVNYELFGALFQYTNRFGQITDFTELFATLRAKNVIVTVAADIMSLVLLKSPGSMGADVVFGSAQRFGVPMGFGGPHAAFFVARDEHKRSMPGRIIGVSKDARGNRALRMAMQTREQHIRREKANSNICTAQILLANMASFYAVFHGPDGLKTIASRIHRFADILAAGLQAKGVSLVNSTWFDTISIKGLDVAAVNARALAAEMNLRFDADGTVGVSLDETTLRTDIDALFDVILGAGHGLDVAALDAQIVGQGSQSIPAALVRQDAILSHPTFNRYQSETEMMRYIKRLESKDLALNYSMISLGSCTMKLNAAVEMLPVSWPEFANMHPFSPLDQAKGYTQLIEELSTWLVNITGYDAVCIQPNSGAQGEYAGLLAIKKYHESRGDAHRNICLIPQSAHGTNPASAQLAGMQVVVTACDKQGNVDLDDLKTKAAEVAGNLSCIMITYPSTHGVYEESIREICDIVHQHGGQVYLDGANMNAQVGLTSPGFIGADVSHLNLHKTFAIPHGGGGPGMGPIGVKSHLAPFVAGHVVVKPGRESDHNGAVSAAPYGSAGILPISWMYIKLLGSQGLKKSTQTALLNANYVMKKLSEHYPVLFRGRNDRVAHECIIDLRPLKEASGVTEMDIAKRLNDYGFHAPTMSFPVAGTLMIEPTESESKVELDRFIDAMVSIRAEIAKVESGEWPVDNNPLHNAPHTMADIMDPEFDTRPYSREVAVFPSAAVRTNKFWPTVNRIDDVYGDRNLMCSCAPLSDYE.

N6-(pyridoxal phosphate)lysine is present on Lys-709.

This sequence belongs to the GcvP family. In terms of assembly, the glycine cleavage system is composed of four proteins: P, T, L and H. Requires pyridoxal 5'-phosphate as cofactor.

The catalysed reaction is N(6)-[(R)-lipoyl]-L-lysyl-[glycine-cleavage complex H protein] + glycine + H(+) = N(6)-[(R)-S(8)-aminomethyldihydrolipoyl]-L-lysyl-[glycine-cleavage complex H protein] + CO2. In terms of biological role, the glycine cleavage system catalyzes the degradation of glycine. The P protein binds the alpha-amino group of glycine through its pyridoxal phosphate cofactor; CO(2) is released and the remaining methylamine moiety is then transferred to the lipoamide cofactor of the H protein. The chain is Glycine dehydrogenase (decarboxylating) from Shewanella baltica (strain OS223).